A 467-amino-acid polypeptide reads, in one-letter code: MDRKKKPLDVTASSLVDLKAELFRKQEEFKQEKLLKDSGVFGKPKTINKKPSIWSKQNAGVTSRAEKDAEQKLEEQKTLDKAREKLEEKAKLYEKMTKGDFLDEEVEDMYLVDFTQKIIVKRKEMEVLGATRESQIEEERDDDDKEEFSDKDIPPPQDPSEEWVDYVDSLGRSRRCMRKDLPSLLEMDKNLQGRLFVSPANEKTLLSEDMRKELQRQQWEEEEREALKKPMGPIHYEDIRENEARQLGVGYFAFARDKELRNKQMKTLEMLREQTTDQRIKRENIKEKRKAMLEARLAKLRQKKMKKSKEDGTEEEGREADGVVPEPSEPKPVPAPAPVAQNSKVEVIIQERRDTKPGVPHIREWDRGKDFSFGFWSKKQSELRAERDPEFAPPSNYFVGQKRTAPMSSQPQSRPGSAPSDLGHSSGQSQEPSSSHTSTPASESSPQAPTVTFQTLDDMISYYKQVT.

Disordered regions lie at residues 47–76 and 129–163; these read INKK…LEEQ and GATR…SEEW. Positions 64 to 76 are enriched in basic and acidic residues; it reads RAEKDAEQKLEEQ. Residues 64-99 are a coiled coil; the sequence is RAEKDAEQKLEEQKTLDKAREKLEEKAKLYEKMTKG. Over residues 136 to 147 the composition is skewed to acidic residues; sequence IEEERDDDDKEE. The residue at position 198 (Ser-198) is a Phosphoserine. The stretch at 268–310 forms a coiled coil; that stretch reads LEMLREQTTDQRIKRENIKEKRKAMLEARLAKLRQKKMKKSKE. Disordered regions lie at residues 301 to 365 and 379 to 454; these read RQKK…IREW and KQSE…VTFQ. Basic and acidic residues-rich tracts occupy residues 349–365 and 379–390; these read IQER…IREW and KQSELRAERDPE. The segment covering 406 to 415 has biased composition (polar residues); it reads PMSSQPQSRP. A compositionally biased stretch (low complexity) spans 423–446; that stretch reads GHSSGQSQEPSSSHTSTPASESSP.

It localises to the nucleus. Functionally, probably involved in neuronal development. The polypeptide is Coiled-coil domain-containing protein 174 (Ccdc174) (Mus musculus (Mouse)).